The primary structure comprises 288 residues: T-lymphocyte activation antigen CD80 (288 aa).

An N-terminal signal peptide occupies residues 1 to 34 (MGHTRRQGTSPSKCPYLNFFQLLVLAGLSHFCSG). An Ig-like V-type domain is found at 35–135 (VIHVTKEVKE…FKREHLAEVT (101 aa)). Residues 35 to 242 (VIHVTKEVKE…TTKQEHFPDN (208 aa)) are Extracellular-facing. 2 disulfides stabilise this stretch: Cys50/Cys116 and Cys162/Cys216. N-linked (GlcNAc...) asparagine glycans are attached at residues Asn53, Asn89, Asn98, Asn186, Asn207, Asn211, Asn226, and Asn232. In terms of domain architecture, Ig-like C2-type spans 145-230 (PSISDFEIPT…GHLRVNQTFN (86 aa)). The chain crosses the membrane as a helical span at residues 243–263 (LLPSWAITLISVNGIFVICCL). 4 S-palmitoyl cysteine lipidation sites follow: Cys261, Cys262, Cys266, and Cys271. The Cytoplasmic segment spans residues 264–288 (TYCFAPRCRERRRNERLRRESVRPV). Ser284 carries the post-translational modification Phosphoserine.

As to quaternary structure, homodimer. Interacts with CTLA4; this interaction inhibits T-cell activation. Interacts with PDL1/CD274; this interaction blocks PDL1/PDCD1 binding and thus PDL1/CD274 inhibitory function. Interacts with CD28. In terms of assembly, (Microbial infection) Interacts with adenovirus subgroup B fiber proteins. (Microbial infection) Interacts with Orthopoxvirus OPG038/M2 protein, inhibiting the interaction with CTLA4/CD152. In terms of processing, palmitoylated by ZDHHC20; palmitoylation protects CD80 from ubiquitin-mediated degradation, regulating the protein stability, and ensures its accurate plasma membrane localization. Expressed on activated B-cells, macrophages and dendritic cells.

It localises to the cell membrane. Costimulatory molecule that belongs to the immunoglobulin superfamily that plays an important role in T-lymphocyte activation. Acts as the primary auxiliary signal augmenting the MHC/TCR signal in naive T-cells together with the CD28 receptor which is constitutively expressed on the cell surface of T-cells. In turn, activates different signaling pathways such as NF-kappa-B or MAPK leading to the production of different cytokines. In addition, CD28/CD80 costimulatory signal stimulates glucose metabolism and ATP synthesis of T-cells by activating the PI3K/Akt signaling pathway. Also acts as a regulator of PDL1/PDCD1 interactions to limit excess engagement of PDL1 and its inhibitory role in immune responses. Expressed on B-cells, plays a critical role in regulating interactions between B-cells and T-cells in both early and late germinal center responses, which are crucial for the generation of effective humoral immune responses. Functionally, (Microbial infection) Acts as a receptor for adenovirus subgroup B. The chain is T-lymphocyte activation antigen CD80 (CD80) from Homo sapiens (Human).